A 509-amino-acid chain; its full sequence is ATP synthase subunit alpha (509 aa).

169–176 serves as a coordination point for ATP; sequence GDRQTGKT.

This sequence belongs to the ATPase alpha/beta chains family. F-type ATPases have 2 components, CF(1) - the catalytic core - and CF(0) - the membrane proton channel. CF(1) has five subunits: alpha(3), beta(3), gamma(1), delta(1), epsilon(1). CF(0) has three main subunits: a(1), b(2) and c(9-12). The alpha and beta chains form an alternating ring which encloses part of the gamma chain. CF(1) is attached to CF(0) by a central stalk formed by the gamma and epsilon chains, while a peripheral stalk is formed by the delta and b chains.

It localises to the cell inner membrane. The catalysed reaction is ATP + H2O + 4 H(+)(in) = ADP + phosphate + 5 H(+)(out). Its function is as follows. Produces ATP from ADP in the presence of a proton gradient across the membrane. The alpha chain is a regulatory subunit. In Brucella ovis (strain ATCC 25840 / 63/290 / NCTC 10512), this protein is ATP synthase subunit alpha.